The primary structure comprises 229 residues: Small ribosomal subunit protein uS3 (229 aa).

The KH type-2 domain occupies 39-107 (IRKFLKKELY…EVFINIKEEK (69 aa)).

Belongs to the universal ribosomal protein uS3 family. As to quaternary structure, part of the 30S ribosomal subunit. Forms a tight complex with proteins S10 and S14.

In terms of biological role, binds the lower part of the 30S subunit head. Binds mRNA in the 70S ribosome, positioning it for translation. This Nitratiruptor sp. (strain SB155-2) protein is Small ribosomal subunit protein uS3.